We begin with the raw amino-acid sequence, 166 residues long: Ubiquitin-conjugating enzyme E2 13 (166 aa).

A UBC core domain is found at 4-164; the sequence is QACLLLQKQL…VSRCVRKSQE (161 aa). Cys89 acts as the Glycyl thioester intermediate in catalysis.

Belongs to the ubiquitin-conjugating enzyme family.

It carries out the reaction S-ubiquitinyl-[E1 ubiquitin-activating enzyme]-L-cysteine + [E2 ubiquitin-conjugating enzyme]-L-cysteine = [E1 ubiquitin-activating enzyme]-L-cysteine + S-ubiquitinyl-[E2 ubiquitin-conjugating enzyme]-L-cysteine.. It functions in the pathway protein modification; protein ubiquitination. Functionally, accepts the ubiquitin from the E1 complex and catalyzes its covalent attachment to other proteins. Involved in the formation of multiubiquitin chains. Signal the protein for selective degradation. The chain is Ubiquitin-conjugating enzyme E2 13 (UBC13) from Arabidopsis thaliana (Mouse-ear cress).